The sequence spans 215 residues: Adenylate kinase (215 aa).

10–15 serves as a coordination point for ATP; it reads GTGKGT. The segment at 30–59 is NMP; the sequence is STGHILRKISTKKTLFGEKIKNIINSGKLV. AMP contacts are provided by residues Thr31, Arg36, 57–59, 85–88, and Gln92; these read KLV and GFPR. An LID region spans residues 122-157; that stretch reads TRTINPITGTIYNNVIQKNSELKNLKINTLKSRLDD. Residues Arg123 and 132–133 contribute to the ATP site; that span reads IY. Residues Arg154 and Arg165 each coordinate AMP. Asn198 serves as a coordination point for ATP.

Belongs to the adenylate kinase family. In terms of assembly, monomer.

Its subcellular location is the cytoplasm. The enzyme catalyses AMP + ATP = 2 ADP. Its pathway is purine metabolism; AMP biosynthesis via salvage pathway; AMP from ADP: step 1/1. Catalyzes the reversible transfer of the terminal phosphate group between ATP and AMP. Plays an important role in cellular energy homeostasis and in adenine nucleotide metabolism. This Buchnera aphidicola subsp. Baizongia pistaciae (strain Bp) protein is Adenylate kinase.